The chain runs to 440 residues: MSGFGGVKNVVVVGLGMTGLSVVKHLLRQPEALTIKVIDTRDTPPGHDQLPENVELHSGGWQQDWLINADLIVTNPGIALASPQLKPAIDKGIQIVGDIELFAWAVNAPVIAITGSNGKSTVTDLTGEMAKAAGVKTAVGGNIGFAALDLLEQDAELYVLELSSFQLETTSTLKLKAAAFLNLSEDHMDRYQGMADYRQAKLRIFDHAEVCIVNRDDKQTYPDVEKTLKSFGFDQGDYGCIEKDGIEYLAKDAMSLLAANELGLVGKHNIANSLVAIALLDAVGINLDATLDTLRTYNGLTHRCQVVADNNGIRWVNDSKATNVASTLAALSGLQLEGKLHLLVGGVGKGADFSELSPALHDLNLMMYCFGEDGDQFVSLDPRSLLCETMDEAVATLYPTLNKGDMVMLSPACASFDQYANFMARGDAFTQLAKQYSIES.

Position 115-121 (115-121 (GSNGKST)) interacts with ATP.

It belongs to the MurCDEF family.

It is found in the cytoplasm. It carries out the reaction UDP-N-acetyl-alpha-D-muramoyl-L-alanine + D-glutamate + ATP = UDP-N-acetyl-alpha-D-muramoyl-L-alanyl-D-glutamate + ADP + phosphate + H(+). Its pathway is cell wall biogenesis; peptidoglycan biosynthesis. Functionally, cell wall formation. Catalyzes the addition of glutamate to the nucleotide precursor UDP-N-acetylmuramoyl-L-alanine (UMA). This chain is UDP-N-acetylmuramoylalanine--D-glutamate ligase, found in Aliivibrio fischeri (strain MJ11) (Vibrio fischeri).